The chain runs to 61 residues: Small ribosomal subunit protein uS14 (61 aa).

Residues C24, C27, C40, and C43 each coordinate Zn(2+).

It belongs to the universal ribosomal protein uS14 family. Zinc-binding uS14 subfamily. As to quaternary structure, part of the 30S ribosomal subunit. Contacts proteins S3 and S10. Zn(2+) is required as a cofactor.

Functionally, binds 16S rRNA, required for the assembly of 30S particles and may also be responsible for determining the conformation of the 16S rRNA at the A site. The polypeptide is Small ribosomal subunit protein uS14 (Desulfitobacterium hafniense (strain Y51)).